A 29-amino-acid chain; its full sequence is Cyclotide mela-4 (29 aa).

Positions 1-29 (GKPICGETCFKGKCYTPGCTCSYPICKKN) form a cross-link, cyclopeptide (Gly-Asn). Intrachain disulfides connect cysteine 5–cysteine 19, cysteine 9–cysteine 21, and cysteine 14–cysteine 26.

This is a cyclic peptide. Post-translationally, contains 3 disulfide bonds.

Probably participates in a plant defense mechanism (Potential). Binds to and induces leakage in phospholipd membranes, particularly ones containing 1-palmitoyl-2-oleophosphatidylethanolamine (POPE). In vitro, displays cytotoxicity against cultured cells. Not active against Gram-negative bacterium E.coli ATCC 25922 or Gram-positive bacterium S.aureus ATCC 25923 up to a concentration of 64 uM. The chain is Cyclotide mela-4 from Melicytus latifolius (Norfolk Island mahoe).